A 127-amino-acid chain; its full sequence is Glycine cleavage system H protein 1 (127 aa).

The region spanning 20–101 (LLTVGITAYA…LGEAWFFRFR (82 aa)) is the Lipoyl-binding domain. Lysine 60 is subject to N6-lipoyllysine.

This sequence belongs to the GcvH family. As to quaternary structure, the glycine cleavage system is composed of four proteins: P, T, L and H. The cofactor is (R)-lipoate.

Functionally, the glycine cleavage system catalyzes the degradation of glycine. The H protein shuttles the methylamine group of glycine from the P protein to the T protein. This is Glycine cleavage system H protein 1 from Pseudomonas aeruginosa (strain ATCC 15692 / DSM 22644 / CIP 104116 / JCM 14847 / LMG 12228 / 1C / PRS 101 / PAO1).